Here is a 227-residue protein sequence, read N- to C-terminus: Broad specificity amino-acid racemase RacX (227 aa).

Substrate is bound at residue 51-53 (DRP). Residue cysteine 82 is the Proton donor/acceptor of the active site. Residues 83-85 (NTA) and lysine 161 contribute to the substrate site. Cysteine 191 (proton donor/acceptor) is an active-site residue.

It belongs to the aspartate/glutamate racemases family. As to quaternary structure, homodimer.

The enzyme catalyses an L-alpha-amino acid = a D-alpha-amino acid. The catalysed reaction is (2S,6S)-2,6-diaminopimelate = meso-2,6-diaminopimelate. It catalyses the reaction L-lysine = D-lysine. It carries out the reaction L-arginine = D-arginine. The enzyme catalyses L-ornithine = D-ornithine. The catalysed reaction is L-histidine = D-histidine. It catalyses the reaction L-alanine = D-alanine. It carries out the reaction L-tyrosine = D-tyrosine. The enzyme catalyses L-phenylalanine = D-phenylalanine. The catalysed reaction is L-serine = D-serine. It catalyses the reaction L-glutamine = D-glutamine. It carries out the reaction L-methionine = D-methionine. The enzyme catalyses L-asparagine = D-asparagine. The catalysed reaction is L-homoserine = D-homoserine. Amino-acid racemase able to utilize a broad range of substrates. Preferentially catalyzes the epimerization of LL-diaminopimelate, as well as the racemization of D-lysine, L-arginine, L-ornithine, L-lysine and D-arginine. Has lower activity against D-ornithine, L-histidine, L-alanine, L-tyrosine, L-phenylalanine, L-serine, L-glutamine, L-methionine, L-asparagine and L-homoserine. Has weak activity against L-norleucine, L-aminobutyric acid and L-norvaline. Has no activity toward nine L-amino acids (Thr, Glu, Asp, Val, Leu, Ile, Trp, Cit and Aad). D-amino acids might be used as components of peptidoglycan and/or be involved in peptidoglycan metabolism and remodeling. In Bacillus subtilis (strain 168), this protein is Broad specificity amino-acid racemase RacX (racX).